A 251-amino-acid chain; its full sequence is MLGEKSDFTIHPINVLQDNIVWVWVHNCNAVVVDPSISGPVEKWLLEKNLSLKAILQTHHHDDHIGGTQKLIKTWPEAKVVASKKEHKRIPFQTFSVDDNDIFNLMDAEIKVIEVHGHTDNHIAFYISKQNAKCNILFPGDTLFGGGCGRLLEGSPVQMFESLYKLNSLPENTEIYPAHEYTESNLKWALSLEPGNISIIERLKLIQKKLQKGMSSLPSTLSEERKTNLFLIAENVEKFTMLRKHKDRWKC.

Residues His-59, His-61, Asp-63, His-64, His-118, Asp-141, and His-179 each contribute to the Zn(2+) site.

It belongs to the metallo-beta-lactamase superfamily. Glyoxalase II family. In terms of assembly, monomer. The cofactor is Zn(2+).

It catalyses the reaction an S-(2-hydroxyacyl)glutathione + H2O = a 2-hydroxy carboxylate + glutathione + H(+). Its pathway is secondary metabolite metabolism; methylglyoxal degradation; (R)-lactate from methylglyoxal: step 2/2. In terms of biological role, thiolesterase that catalyzes the hydrolysis of S-D-lactoyl-glutathione to form glutathione and D-lactic acid. In Prochlorococcus marinus (strain NATL1A), this protein is Hydroxyacylglutathione hydrolase.